Reading from the N-terminus, the 278-residue chain is HTH-type transcriptional activator RhaS (278 aa).

Positions 174–272 constitute an HTH araC/xylS-type domain; the sequence is NQLMAWLEDH…NWSPRDIRQG (99 aa). 2 DNA-binding regions (H-T-H motif) span residues 191–212 and 239–262; these read EAVA…KQHT and VTEI…RREF.

In terms of assembly, binds DNA as a dimer.

The protein resides in the cytoplasm. Its function is as follows. Activates expression of the rhaBAD and rhaT operons. This is HTH-type transcriptional activator RhaS from Salmonella agona (strain SL483).